A 273-amino-acid chain; its full sequence is Undecaprenyl-diphosphatase (273 aa).

Helical transmembrane passes span 54 to 74 (LGSI…LIGI), 90 to 110 (LTLI…LVFH), 116 to 136 (LFNP…LIAA), 156 to 178 (QAFM…SGAT), 190 to 210 (YAAS…ATVL), 222 to 242 (ADIP…LIAI), and 252 to 272 (ISFI…YVVF).

It belongs to the UppP family.

The protein resides in the cell inner membrane. The catalysed reaction is di-trans,octa-cis-undecaprenyl diphosphate + H2O = di-trans,octa-cis-undecaprenyl phosphate + phosphate + H(+). In terms of biological role, catalyzes the dephosphorylation of undecaprenyl diphosphate (UPP). Confers resistance to bacitracin. In Salmonella paratyphi A (strain ATCC 9150 / SARB42), this protein is Undecaprenyl-diphosphatase.